We begin with the raw amino-acid sequence, 270 residues long: G-box-binding factor 4 (270 aa).

Positions 1–46 (MASFKLMSSSNSDLSRRNSSSASSSPSIRSSHHLRPNPHADHSRIS) are disordered. Low complexity predominate over residues 8–29 (SSSNSDLSRRNSSSASSSPSIR). S27 carries the post-translational modification Phosphoserine. The region spanning 187-250 (AAQRQKRMIK…YKKLMEVLIP (64 aa)) is the bZIP domain. The basic motif stretch occupies residues 190–208 (RQKRMIKNRESAARSRERK). The tract at residues 215–229 (LETLAAKLEEENEQL) is leucine-zipper. A disordered region spans residues 250-270 (PVDEKPRPPSRPLSRSHSLEW). A compositionally biased stretch (low complexity) spans 261–270 (PLSRSHSLEW).

The protein belongs to the bZIP family. In terms of assembly, DNA-binding heterodimer with GBF2 and GBF3; non DNA-binding homodimer.

The protein localises to the nucleus. Its function is as follows. Binds to the G-box motif (5'-CCACGTGG-3') of the rbcS-1A gene promoter. G-box and G-box-like motifs are cis-acting elements defined in promoters of certain plant genes which are regulated by such diverse stimuli as light-induction or hormone control. The sequence is that of G-box-binding factor 4 (GBF4) from Arabidopsis thaliana (Mouse-ear cress).